A 356-amino-acid chain; its full sequence is Histidinol-phosphate aminotransferase (356 aa).

Lysine 214 bears the N6-(pyridoxal phosphate)lysine mark.

This sequence belongs to the class-II pyridoxal-phosphate-dependent aminotransferase family. Histidinol-phosphate aminotransferase subfamily. Homodimer. The cofactor is pyridoxal 5'-phosphate.

The catalysed reaction is L-histidinol phosphate + 2-oxoglutarate = 3-(imidazol-4-yl)-2-oxopropyl phosphate + L-glutamate. It functions in the pathway amino-acid biosynthesis; L-histidine biosynthesis; L-histidine from 5-phospho-alpha-D-ribose 1-diphosphate: step 7/9. The polypeptide is Histidinol-phosphate aminotransferase (Escherichia coli (strain SMS-3-5 / SECEC)).